A 93-amino-acid polypeptide reads, in one-letter code: MDGIKYAVFTEKSLRLLGKNQYTFNVESGFTKTEIKHWVELFFGVKVVAVNSHRLPGKGRRIGPILGHTMHYRRMIITLQPGYSIPLLDREKN.

It belongs to the universal ribosomal protein uL23 family. As to quaternary structure, part of the 50S ribosomal subunit.

It localises to the plastid. It is found in the chloroplast. Functionally, binds to 23S rRNA. This is Large ribosomal subunit protein uL23cy (rpl23-B) from Agrostis stolonifera (Creeping bentgrass).